The following is a 414-amino-acid chain: Esterase FrsA (414 aa).

Belongs to the FrsA family.

It catalyses the reaction a carboxylic ester + H2O = an alcohol + a carboxylate + H(+). In terms of biological role, catalyzes the hydrolysis of esters. The chain is Esterase FrsA from Shigella boydii serotype 4 (strain Sb227).